The sequence spans 33 residues: MLFTLAWASLAAVFSFSIAMVVWGRNGDGSLNF.

Residues 2 to 22 (LFTLAWASLAAVFSFSIAMVV) traverse the membrane as a helical segment.

Belongs to the PetN family. The 4 large subunits of the cytochrome b6-f complex are cytochrome b6, subunit IV (17 kDa polypeptide, PetD), cytochrome f and the Rieske protein, while the 4 small subunits are PetG, PetL, PetM and PetN. The complex functions as a dimer.

The protein resides in the cellular thylakoid membrane. Its function is as follows. Component of the cytochrome b6-f complex, which mediates electron transfer between photosystem II (PSII) and photosystem I (PSI), cyclic electron flow around PSI, and state transitions. This is Cytochrome b6-f complex subunit 8 from Prochlorococcus marinus (strain MIT 9303).